The chain runs to 285 residues: NADPH-dependent 7-cyano-7-deazaguanine reductase (285 aa).

91–93 (IES) is a substrate binding site. Residue 93–94 (SK) participates in NADPH binding. Cysteine 192 (thioimide intermediate) is an active-site residue. Residue aspartate 199 is the Proton donor of the active site. A substrate-binding site is contributed by 231–232 (HE). Residue 260 to 261 (RG) coordinates NADPH.

This sequence belongs to the GTP cyclohydrolase I family. QueF type 2 subfamily. In terms of assembly, homodimer.

The protein resides in the cytoplasm. The enzyme catalyses 7-aminomethyl-7-carbaguanine + 2 NADP(+) = 7-cyano-7-deazaguanine + 2 NADPH + 3 H(+). It participates in tRNA modification; tRNA-queuosine biosynthesis. Functionally, catalyzes the NADPH-dependent reduction of 7-cyano-7-deazaguanine (preQ0) to 7-aminomethyl-7-deazaguanine (preQ1). This Psychromonas ingrahamii (strain DSM 17664 / CCUG 51855 / 37) protein is NADPH-dependent 7-cyano-7-deazaguanine reductase.